The following is a 394-amino-acid chain: Acetyl-CoA acetyltransferase (394 aa).

The Acyl-thioester intermediate role is filled by cysteine 88. Residues histidine 349 and cysteine 379 each act as proton acceptor in the active site.

This sequence belongs to the thiolase-like superfamily. Thiolase family.

It is found in the cytoplasm. It catalyses the reaction 2 acetyl-CoA = acetoacetyl-CoA + CoA. It participates in metabolic intermediate biosynthesis; (R)-mevalonate biosynthesis; (R)-mevalonate from acetyl-CoA: step 1/3. The chain is Acetyl-CoA acetyltransferase (atoB) from Escherichia coli (strain K12).